A 158-amino-acid chain; its full sequence is MFDILMYLFENFIHSETEIRVDQDELTEELVRAGFHHDEIYKALAWLEKLAALQETDIKPYFCKGISTSLSRIYTHEEQMRLDVECRGFLMFLEQVNVLDASTREMVIDRVMEIDSSEFCLEDLKWVVLMVLFNVPGKEKAYAQMEDLLFEEPDGILH.

The protein belongs to the Smg family.

The chain is Protein Smg homolog from Alteromonas mediterranea (strain DSM 17117 / CIP 110805 / LMG 28347 / Deep ecotype).